The chain runs to 184 residues: Thymidine kinase (184 aa).

ATP is bound by residues 10–17 (GPMYSGKT) and 83–86 (DEVQ). Catalysis depends on Glu-84, which acts as the Proton acceptor. Positions 140, 143, 173, and 176 each coordinate Zn(2+).

Belongs to the thymidine kinase family. As to quaternary structure, homotetramer.

It is found in the cytoplasm. The catalysed reaction is thymidine + ATP = dTMP + ADP + H(+). The sequence is that of Thymidine kinase from Thermotoga petrophila (strain ATCC BAA-488 / DSM 13995 / JCM 10881 / RKU-1).